The primary structure comprises 283 residues: Protease HtpX (283 aa).

The next 2 helical transmembrane spans lie at 4–24 (ILLFLATNMAVMLVLGIILSV) and 33–53 (GGILIMALLFGFAGSLISLFL). Histidine 139 is a Zn(2+) binding site. Residue glutamate 140 is part of the active site. Residue histidine 143 coordinates Zn(2+). Transmembrane regions (helical) follow at residues 147-167 (GDMVTMALLQGVLNTFVIFLS) and 190-210 (IYFLVSMVLEMLFGVLASIIA). Glutamate 218 contacts Zn(2+).

The protein belongs to the peptidase M48B family. Zn(2+) serves as cofactor.

It is found in the cell inner membrane. This is Protease HtpX from Haemophilus influenzae (strain PittGG).